We begin with the raw amino-acid sequence, 556 residues long: Carotenoid-cleaving dioxygenase, mitochondrial (556 aa).

Positions 203, 263, 334, and 550 each coordinate Fe cation.

The protein belongs to the carotenoid oxygenase family. Fe(2+) is required as a cofactor.

The protein resides in the mitochondrion. It carries out the reaction all-trans-beta-carotene + O2 = beta-ionone + all-trans-10'-apo-beta-carotenal. The catalysed reaction is 5-cis-lycopene + O2 = 5-cis-10'-apo-lycopenal + (3E,5E)-6,10-dimethylundeca-3,5,9-trien-2-one. It catalyses the reaction 13-cis-lycopene + O2 = 13-cis-10'-apo-lycopenal + (3E,5E)-6,10-dimethylundeca-3,5,9-trien-2-one. The enzyme catalyses lutein + O2 = (3R,6R)-hydroxy-alpha-ionone + (3R)-3-hydroxy-10'-apo-beta-carotenal. It carries out the reaction lutein + O2 = (3R,6R)-3-hydroxy-10'-apo-alpha-carotenal + (3R)-hydroxy-beta-ionone. The catalysed reaction is all-trans-zeaxanthin + 2 O2 = 4,9-dimethyldodeca-2,4,6,8,10-pentaenedial + 2 (3R)-hydroxy-beta-ionone. It catalyses the reaction all-trans-zeaxanthin + O2 = (3R)-3-hydroxy-10'-apo-beta-carotenal + (3R)-hydroxy-beta-ionone. The enzyme catalyses beta-cryptoxanthin + O2 = all-trans-10'-apo-beta-carotenal + (3R)-hydroxy-beta-ionone. It carries out the reaction all-trans-10'-apo-beta-carotenal + O2 = beta-ionone + 4,9-dimethyldodeca-2,4,6,8,10-pentaenedial. The catalysed reaction is (3R)-3-hydroxy-10'-apo-beta-carotenal + O2 = 4,9-dimethyldodeca-2,4,6,8,10-pentaenedial + (3R)-hydroxy-beta-ionone. It catalyses the reaction (3R,6R)-3-hydroxy-10'-apo-alpha-carotenal + O2 = (3R,6R)-hydroxy-alpha-ionone + 4,9-dimethyldodeca-2,4,6,8,10-pentaenedial. In terms of biological role, broad specificity mitochondrial dioxygenase that mediates the asymmetric oxidative cleavage of carotenoids. Cleaves carotenes (pure hydrocarbon carotenoids) such as all-trans-beta-carotene and lycopene as well as xanthophylls (oxygenated carotenoids) such as zeaxanthin, lutein and beta-cryptoxanthin at both the 9,10 and the 9',10' carbon-carbon double bond. Through its function in carotenoids metabolism regulates oxidative stress and the production of important signaling molecules. The protein is Carotenoid-cleaving dioxygenase, mitochondrial of Macaca fascicularis (Crab-eating macaque).